The primary structure comprises 156 residues: Ribosomal RNA large subunit methyltransferase H (156 aa).

Residues Leu73, Gly104, and 123 to 128 contribute to the S-adenosyl-L-methionine site; that span reads LSSLTL.

The protein belongs to the RNA methyltransferase RlmH family. As to quaternary structure, homodimer.

The protein localises to the cytoplasm. It carries out the reaction pseudouridine(1915) in 23S rRNA + S-adenosyl-L-methionine = N(3)-methylpseudouridine(1915) in 23S rRNA + S-adenosyl-L-homocysteine + H(+). Its function is as follows. Specifically methylates the pseudouridine at position 1915 (m3Psi1915) in 23S rRNA. The chain is Ribosomal RNA large subunit methyltransferase H from Neisseria gonorrhoeae (strain NCCP11945).